A 396-amino-acid chain; its full sequence is Period circadian protein (396 aa).

Disordered stretches follow at residues 27–120 (VTAP…APPV), 167–188 (SGPG…WEGE), 253–275 (GGNG…QYTQ), and 333–362 (SPSS…TSQA). Residues 93 to 114 (GTSGTGNSGDGGGGGGANGTGS) are compositionally biased toward gly residues. Over residues 253–262 (GGNGNVGSGN) the composition is skewed to gly residues. A compositionally biased stretch (low complexity) spans 333–342 (SPSSTNTNPN).

Forms a heterodimer with timeless (TIM); the complex then translocates into the nucleus. Post-translationally, phosphorylated with a circadian rhythmicity, probably by the double-time protein (dbt). Phosphorylation could be implicated in the stability of per monomer and in the formation of heterodimer per-tim.

The protein resides in the nucleus. Its subcellular location is the cytoplasm. It localises to the perinuclear region. Functionally, essential for biological clock functions. Determines the period length of circadian and ultradian rhythms; an increase in PER dosage leads to shortened circadian rhythms and a decrease leads to lengthened circadian rhythms. Essential for the circadian rhythmicity of locomotor activity, eclosion behavior, and for the rhythmic component of the male courtship song that originates in the thoracic nervous system. The biological cycle depends on the rhythmic formation and nuclear localization of the TIM-PER complex. Light induces the degradation of TIM, which promotes elimination of PER. Nuclear activity of the heterodimer coordinatively regulates PER and TIM transcription through a negative feedback loop. Behaves as a negative element in circadian transcriptional loop. Does not appear to bind DNA, suggesting indirect transcriptional inhibition. This is Period circadian protein (per) from Drosophila paulistorum (Fruit fly).